Consider the following 467-residue polypeptide: Serine/threonine-protein phosphatase 2A 56 kDa regulatory subunit epsilon isoform (467 aa).

A disordered region spans residues 1–40 (MSSAPTTPPSVDKVDGFSRKSVRKARQKRSQSSSQFRSQG). S2 carries the post-translational modification N-acetylserine. T7 carries the phosphothreonine modification. Residues 20–29 (KSVRKARQKR) show a composition bias toward basic residues. Residues S30, S32, and S34 each carry the phosphoserine modification. The segment covering 30–40 (SQSSSQFRSQG) has biased composition (low complexity).

Belongs to the phosphatase 2A regulatory subunit B56 family. In terms of assembly, found in a complex with at least ARL2, PPP2CB; PPP2R1A, PPP2R2A, PPP2R5E and TBCD. PP2A consists of a common heterodimeric core enzyme, composed of a 36 kDa catalytic subunit (subunit C) and a 65 kDa constant regulatory subunit (PR65 or subunit A), that associates with a variety of regulatory subunits. Proteins that associate with the core dimer include three families of regulatory subunits B (the R2/B/PR55/B55, R3/B''/PR72/PR130/PR59 and R5/B'/B56 families), the 48 kDa variable regulatory subunit, viral proteins, and cell signaling molecules. Interacts with SGO1. Phosphorylated on serine residues.

The protein resides in the cytoplasm. Its function is as follows. The B regulatory subunit might modulate substrate selectivity and catalytic activity, and might also direct the localization of the catalytic enzyme to a particular subcellular compartment. The chain is Serine/threonine-protein phosphatase 2A 56 kDa regulatory subunit epsilon isoform (PPP2R5E) from Homo sapiens (Human).